A 136-amino-acid chain; its full sequence is Large ribosomal subunit protein uL3 (136 aa).

N5-methylglutamine is present on Q83.

The protein belongs to the universal ribosomal protein uL3 family. Part of the 50S ribosomal subunit. Forms a cluster with proteins L14 and L19. In terms of processing, methylated by PrmB.

One of the primary rRNA binding proteins, it binds directly near the 3'-end of the 23S rRNA, where it nucleates assembly of the 50S subunit. In Carsonella ruddii, this protein is Large ribosomal subunit protein uL3 (rplC).